Reading from the N-terminus, the 980-residue chain is Thrombospondin-4 (980 aa).

The first 42 residues, 1–42, serve as a signal peptide directing secretion; the sequence is MTMITPSSKLTLTKGNKSWSSTRCGAFLLLHLVLQPWQRAGA. Positions 43 to 210 constitute a Laminin G-like domain; the sequence is QATPQVFDLL…LEELKLVVRG (168 aa). The EGF-like 1 domain occupies 304–343; the sequence is PTRRCDSSPCFRGVRCTDTRDGFQCGPCPDGYTGNGITCS. 21 disulfides stabilise this stretch: Cys-308–Cys-319, Cys-313–Cys-328, Cys-331–Cys-342, Cys-348–Cys-359, Cys-353–Cys-368, Cys-371–Cys-395, Cys-401–Cys-412, Cys-406–Cys-421, Cys-424–Cys-436, Cys-442–Cys-456, Cys-450–Cys-466, Cys-468–Cys-480, Cys-496–Cys-501, Cys-506–Cys-526, Cys-542–Cys-562, Cys-565–Cys-585, Cys-601–Cys-621, Cys-624–Cys-644, Cys-662–Cys-682, Cys-702–Cys-722, and Cys-738–Cys-959. One can recognise an EGF-like 2; calcium-binding domain in the interval 344–381; it reads DVDECKYHPCYPGVRCTNLAPGFRCDACPVGFTGPMVQ. The EGF-like 3; calcium-binding domain occupies 397-434; sequence DVDECRNGACVLNSICINTLGSYRCGPCKPGYTGDQTR. Positions 438 to 481 constitute an EGF-like 4 domain; sequence TERSCRNPEQNPCSVHAQCIEERQGDVTCVCGVGWAGRAGYVCG. TSP type-3 repeat units follow at residues 482 to 514, 515 to 550, 551 to 573, 574 to 609, 610 to 632, 633 to 670, 671 to 710, and 711 to 746; these read KDVDIDSYPDEELPCSARNCKKDNCKYVPNSGQ, EDADRDGIGDACDEDADGDGILNEQDNCVLTHNVDQ, RNTDKDIFGDACDNCRGVLNNDQ, KDTDGDGKGDACDDDMDGDGIKNILDNCPRVPNRDQ, QDRDGDGVGDACDSCPDVSNPNQ, SDVDNDLVGDSCDTNQDSDGDGHQDSTDNCPTVINSAQ, LDTDKDGIGDECDDDDDNDGMPDLFPPGPDNCRLVPNPAQ, and EDSNNDGVGDICEADFDQDKVIDRIDVCPENAEITL. Residues 596–691 form a disordered region; that stretch reads NILDNCPRVP…CDDDDDNDGM (96 aa). Residues 605–615 show a composition bias toward basic and acidic residues; sequence PNRDQQDRDGD. N-linked (GlcNAc...) asparagine glycosylation occurs at Asn-631. Residues 659-671 are compositionally biased toward polar residues; the sequence is TDNCPTVINSAQL. A compositionally biased stretch (acidic residues) spans 679-690; that stretch reads GDECDDDDDNDG. A TSP C-terminal domain is found at 750–964; it reads RAYQTVVLDP…LKYRCNDTIP (215 aa). Asn-960 is a glycosylation site (N-linked (GlcNAc...) asparagine).

The protein belongs to the thrombospondin family. Homopentamer; disulfide-linked. Interacts with PTBP3. Interacts (via EGF-like 3; calcium-binding domain) with ATF6 and facilitates its processing, activation and nuclear translocation. Interacts with NOTCH1. Mainly expressed in astrocytes, and in ressponse to peripheral nerve injury, significantly up-regulated in the dorsal spinal cord (at protein level).

The protein resides in the endoplasmic reticulum. It localises to the sarcoplasmic reticulum. Its subcellular location is the secreted. It is found in the extracellular space. The protein localises to the extracellular matrix. Functionally, adhesive glycoprotein that mediates cell-to-cell and cell-to-matrix interactions and is involved in various processes including cellular proliferation, migration, adhesion and attachment, inflammatory response to CNS injury, regulation of vascular inflammation and adaptive responses of the heart to pressure overload and in myocardial function and remodeling. Binds to structural extracellular matrix (ECM) proteins and modulates the ECM in response to tissue damage, contributing to cardioprotective and adaptive ECM remodeling. Plays a role in ER stress response, via its interaction with the activating transcription factor 6 alpha (ATF6) which produces adaptive ER stress response factors and protects myocardium from pressure overload. May contribute to spinal presynaptic hypersensitivity and neuropathic pain states after peripheral nerve injury. May play a role in regulating protective astrogenesis from the subventricular zone (SVZ) niche after injury in a NOTCH1-dependent manner. The protein is Thrombospondin-4 (Thbs4) of Rattus norvegicus (Rat).